The primary structure comprises 217 residues: Small ribosomal subunit protein uS3 (217 aa).

A KH type-2 domain is found at 38–106; the sequence is IRKYIEQRLA…RVHINIIEIK (69 aa).

The protein belongs to the universal ribosomal protein uS3 family. Part of the 30S ribosomal subunit. Forms a tight complex with proteins S10 and S14.

Its function is as follows. Binds the lower part of the 30S subunit head. Binds mRNA in the 70S ribosome, positioning it for translation. The protein is Small ribosomal subunit protein uS3 of Lactiplantibacillus plantarum (strain ATCC BAA-793 / NCIMB 8826 / WCFS1) (Lactobacillus plantarum).